Here is a 144-residue protein sequence, read N- to C-terminus: Large ribosomal subunit protein uL15 (144 aa).

Residues M1–R10 show a composition bias toward polar residues. Positions M1–E51 are disordered. The span at G11–G20 shows a compositional bias: basic residues. The span at R21–G31 shows a compositional bias: gly residues. The segment covering G32–G44 has biased composition (basic residues).

The protein belongs to the universal ribosomal protein uL15 family. As to quaternary structure, part of the 50S ribosomal subunit.

Binds to the 23S rRNA. The sequence is that of Large ribosomal subunit protein uL15 from Blochmanniella pennsylvanica (strain BPEN).